The primary structure comprises 233 residues: MNMQILWIIIAIICSYLIGAIPFGYIIPKLFKGIDIREHGSKNVGSTNVLRVLGAKYGIPTFLLDCFKGALPIIIIRYMLGMPELFLISDTYDISIVFGAAAAIGHIKSIYIGFKGGKAVATGVGAVIAINPIIGLSGIGLFFIVAFSTKYVSIGSVVASFSVAVMMWIGVLIKEIWIPVPNLTISYESQIINLVAISLIVLLIIYMHKKNFIRLMNGTENKIGQKKIQNITK.

Helical transmembrane passes span 7–27 (WIIIAIICSYLIGAIPFGYII), 94–114 (ISIVFGAAAAIGHIKSIYIGF), 127–147 (VIAINPIIGLSGIGLFFIVAF), 153–173 (SIGSVVASFSVAVMMWIGVLI), and 185–205 (ISYESQIINLVAISLIVLLII).

The protein belongs to the PlsY family. In terms of assembly, probably interacts with PlsX.

It is found in the cell membrane. It catalyses the reaction an acyl phosphate + sn-glycerol 3-phosphate = a 1-acyl-sn-glycero-3-phosphate + phosphate. The protein operates within lipid metabolism; phospholipid metabolism. Catalyzes the transfer of an acyl group from acyl-phosphate (acyl-PO(4)) to glycerol-3-phosphate (G3P) to form lysophosphatidic acid (LPA). This enzyme utilizes acyl-phosphate as fatty acyl donor, but not acyl-CoA or acyl-ACP. The polypeptide is Glycerol-3-phosphate acyltransferase (Acholeplasma laidlawii).